The primary structure comprises 249 residues: MPRTLIAGNWKMNGLMANLAEVERVAAEVPASSEGAETLLCLPATLIHAGSAKSEGSGLKIGGETCHANEKGAHTGDLAAEMLKDAGASYVIVGHSERRADHGETDAVVAAQASAALRAGITPIICVGETLDQRDAGEVLTVITTQMAESIPEGAEAAAIVIAYEPVWAIGTGRVATSEQIAEVHTSIRNLLVRRFGDAGRTTRILYGGSMNPGNAAEILAVAEVNGGLIGGASLKAADFLAIYRLAAQ.

Residue 9 to 11 (NWK) participates in substrate binding. The active-site Electrophile is His-95. Glu-165 (proton acceptor) is an active-site residue. Residues Gly-171, Ser-210, and 231 to 232 (GG) each bind substrate.

This sequence belongs to the triosephosphate isomerase family. In terms of assembly, homodimer.

The protein localises to the cytoplasm. It carries out the reaction D-glyceraldehyde 3-phosphate = dihydroxyacetone phosphate. Its pathway is carbohydrate biosynthesis; gluconeogenesis. It functions in the pathway carbohydrate degradation; glycolysis; D-glyceraldehyde 3-phosphate from glycerone phosphate: step 1/1. In terms of biological role, involved in the gluconeogenesis. Catalyzes stereospecifically the conversion of dihydroxyacetone phosphate (DHAP) to D-glyceraldehyde-3-phosphate (G3P). This is Triosephosphate isomerase from Hyphomonas neptunium (strain ATCC 15444).